The chain runs to 395 residues: Putative 8-amino-7-oxononanoate synthase (395 aa).

R23 is a substrate binding site. Pyridoxal 5'-phosphate is bound at residue 110 to 111 (GY). H135 is a binding site for substrate. Pyridoxal 5'-phosphate contacts are provided by residues S182, 207-210 (DEAH), and 239-242 (TFSK). K242 carries the post-translational modification N6-(pyridoxal phosphate)lysine. T356 is a substrate binding site.

Belongs to the class-II pyridoxal-phosphate-dependent aminotransferase family. BioF subfamily. In terms of assembly, homodimer. Requires pyridoxal 5'-phosphate as cofactor.

It carries out the reaction 6-carboxyhexanoyl-[ACP] + L-alanine + H(+) = (8S)-8-amino-7-oxononanoate + holo-[ACP] + CO2. The protein operates within cofactor biosynthesis; biotin biosynthesis. Functionally, catalyzes the decarboxylative condensation of pimeloyl-[acyl-carrier protein] and L-alanine to produce 8-amino-7-oxononanoate (AON), [acyl-carrier protein], and carbon dioxide. The chain is Putative 8-amino-7-oxononanoate synthase (bioF) from Bacillus cereus (strain G9842).